The sequence spans 201 residues: Lipopolysaccharide core heptose(II)-phosphate phosphatase (201 aa).

Positions methionine 1 to serine 35 are cleaved as a signal peptide.

Belongs to the phosphoglycerate mutase family. Ais subfamily.

Its subcellular location is the periplasm. It functions in the pathway bacterial outer membrane biogenesis; lipopolysaccharide metabolism. Catalyzes the dephosphorylation of heptose(II) of the outer membrane lipopolysaccharide core. In Salmonella schwarzengrund (strain CVM19633), this protein is Lipopolysaccharide core heptose(II)-phosphate phosphatase.